Reading from the N-terminus, the 149-residue chain is Large ribosomal subunit protein uL22 (149 aa).

Belongs to the universal ribosomal protein uL22 family. Part of the 50S ribosomal subunit.

Its function is as follows. This protein binds specifically to 23S rRNA; its binding is stimulated by other ribosomal proteins, e.g. L4, L17, and L20. It is important during the early stages of 50S assembly. It makes multiple contacts with different domains of the 23S rRNA in the assembled 50S subunit and ribosome. In terms of biological role, the globular domain of the protein is located near the polypeptide exit tunnel on the outside of the subunit, while an extended beta-hairpin is found that lines the wall of the exit tunnel in the center of the 70S ribosome. In Petrotoga mobilis (strain DSM 10674 / SJ95), this protein is Large ribosomal subunit protein uL22.